Consider the following 627-residue polypeptide: Threonine--tRNA ligase (627 aa).

A catalytic region spans residues 221–523 (DHRKLGRELG…LIEHFAGDFP (303 aa)). C319, H370, and H500 together coordinate Zn(2+).

Belongs to the class-II aminoacyl-tRNA synthetase family. Homodimer. Requires Zn(2+) as cofactor.

It is found in the cytoplasm. The catalysed reaction is tRNA(Thr) + L-threonine + ATP = L-threonyl-tRNA(Thr) + AMP + diphosphate + H(+). In terms of biological role, catalyzes the attachment of threonine to tRNA(Thr) in a two-step reaction: L-threonine is first activated by ATP to form Thr-AMP and then transferred to the acceptor end of tRNA(Thr). Also edits incorrectly charged L-seryl-tRNA(Thr). The protein is Threonine--tRNA ligase of Gloeobacter violaceus (strain ATCC 29082 / PCC 7421).